Consider the following 324-residue polypeptide: Biotin synthase (324 aa).

Residues 42–269 (NEVQISSLLN…KSYIRLAAGR (228 aa)) enclose the Radical SAM core domain. Residues Cys-57, Cys-61, and Cys-64 each coordinate [4Fe-4S] cluster. 4 residues coordinate [2Fe-2S] cluster: Cys-101, Cys-132, Cys-192, and Arg-264.

It belongs to the radical SAM superfamily. Biotin synthase family. As to quaternary structure, homodimer. The cofactor is [4Fe-4S] cluster. Requires [2Fe-2S] cluster as cofactor.

It catalyses the reaction (4R,5S)-dethiobiotin + (sulfur carrier)-SH + 2 reduced [2Fe-2S]-[ferredoxin] + 2 S-adenosyl-L-methionine = (sulfur carrier)-H + biotin + 2 5'-deoxyadenosine + 2 L-methionine + 2 oxidized [2Fe-2S]-[ferredoxin]. Its pathway is cofactor biosynthesis; biotin biosynthesis; biotin from 7,8-diaminononanoate: step 2/2. Functionally, catalyzes the conversion of dethiobiotin (DTB) to biotin by the insertion of a sulfur atom into dethiobiotin via a radical-based mechanism. This is Biotin synthase from Ehrlichia canis (strain Jake).